The sequence spans 750 residues: Photosystem I P700 chlorophyll a apoprotein A1 (750 aa).

The next 8 helical transmembrane spans lie at 70 to 93 (IFSA…FHGA), 156 to 179 (LYCT…FHYH), 195 to 219 (LNHH…HVSL), 291 to 309 (TAHH…GHMY), 346 to 369 (WHAQ…HHMY), 385 to 411 (LSLF…IFMV), 433 to 455 (AIIS…LYIH), and 531 to 549 (FLVH…LILL). Cysteine 573 and cysteine 582 together coordinate [4Fe-4S] cluster. 2 helical membrane-spanning segments follow: residues 589–610 (HVFL…HFSW) and 664–686 (LSAY…MFLF). A chlorophyll a'-binding site is contributed by histidine 675. Residues methionine 683 and tyrosine 691 each contribute to the chlorophyll a site. Residue tryptophan 692 coordinates phylloquinone. Residues 724 to 744 (AVGVTHYLLGGIATTWAFFLA) traverse the membrane as a helical segment.

It belongs to the PsaA/PsaB family. As to quaternary structure, the PsaA/B heterodimer binds the P700 chlorophyll special pair and subsequent electron acceptors. PSI consists of a core antenna complex that captures photons, and an electron transfer chain that converts photonic excitation into a charge separation. The eukaryotic PSI reaction center is composed of at least 11 subunits. P700 is a chlorophyll a/chlorophyll a' dimer, A0 is one or more chlorophyll a, A1 is one or both phylloquinones and FX is a shared 4Fe-4S iron-sulfur center. serves as cofactor.

The protein localises to the plastid. It is found in the chloroplast thylakoid membrane. It catalyses the reaction reduced [plastocyanin] + hnu + oxidized [2Fe-2S]-[ferredoxin] = oxidized [plastocyanin] + reduced [2Fe-2S]-[ferredoxin]. Its function is as follows. PsaA and PsaB bind P700, the primary electron donor of photosystem I (PSI), as well as the electron acceptors A0, A1 and FX. PSI is a plastocyanin-ferredoxin oxidoreductase, converting photonic excitation into a charge separation, which transfers an electron from the donor P700 chlorophyll pair to the spectroscopically characterized acceptors A0, A1, FX, FA and FB in turn. Oxidized P700 is reduced on the lumenal side of the thylakoid membrane by plastocyanin. This is Photosystem I P700 chlorophyll a apoprotein A1 from Spinacia oleracea (Spinach).